Here is a 113-residue protein sequence, read N- to C-terminus: Hydrogenase maturation factor HypA (113 aa).

Histidine 2 is a binding site for Ni(2+). Zn(2+) is bound by residues cysteine 73, cysteine 76, cysteine 89, and cysteine 92.

It belongs to the HypA/HybF family.

Its function is as follows. Involved in the maturation of [NiFe] hydrogenases. Required for nickel insertion into the metal center of the hydrogenase. In Bradyrhizobium sp. (strain ORS 278), this protein is Hydrogenase maturation factor HypA.